Here is a 356-residue protein sequence, read N- to C-terminus: Uroporphyrinogen decarboxylase (356 aa).

Substrate is bound by residues 27 to 31 (RQAGR), Asp-77, Tyr-154, Thr-209, and His-327.

Belongs to the uroporphyrinogen decarboxylase family. As to quaternary structure, homodimer.

Its subcellular location is the cytoplasm. The catalysed reaction is uroporphyrinogen III + 4 H(+) = coproporphyrinogen III + 4 CO2. Its pathway is porphyrin-containing compound metabolism; protoporphyrin-IX biosynthesis; coproporphyrinogen-III from 5-aminolevulinate: step 4/4. In terms of biological role, catalyzes the decarboxylation of four acetate groups of uroporphyrinogen-III to yield coproporphyrinogen-III. The polypeptide is Uroporphyrinogen decarboxylase (Cellvibrio japonicus (strain Ueda107) (Pseudomonas fluorescens subsp. cellulosa)).